We begin with the raw amino-acid sequence, 330 residues long: MGKINAENTSKHVTFSKNAFIPVCNWCRNVCGYCTFRNENFKLLKMDEMKEILTKADTFGCREALFTFGENVDENEKVKEELKKMGYSGILEYLYEISAWCLENTNLIPHTNCGILSYDELKYLREVNASMGLMLENSSARLCGTIAHEKSPGKDPKLRIEMIENAGKLKIPFTTGILIGIGETFEERVNSIFEIKRIHEKYGHIQEVIVQNFRSKPQIPMENYKEPSPVEMFKMIILSKLILEDISIQVPPNLNRETGQLFLMAGIDDWGGVSPLTKDFVNPEAPWPDIEELNIFSKELGFTLKERLPVYEKYITEEWVDKKILEKIKK.

Positions 13 to 253 constitute a Radical SAM core domain; the sequence is VTFSKNAFIP…EDISIQVPPN (241 aa). Positions 27, 31, and 34 each coordinate [4Fe-4S] cluster.

It belongs to the radical SAM superfamily. CofG family. Consists of two subunits, CofG and CofH. The cofactor is [4Fe-4S] cluster.

It catalyses the reaction 5-amino-5-(4-hydroxybenzyl)-6-(D-ribitylimino)-5,6-dihydrouracil + S-adenosyl-L-methionine = 7,8-didemethyl-8-hydroxy-5-deazariboflavin + 5'-deoxyadenosine + L-methionine + NH4(+) + H(+). The protein operates within cofactor biosynthesis; coenzyme F0 biosynthesis. Functionally, catalyzes the radical-mediated synthesis of 7,8-didemethyl-8-hydroxy-5-deazariboflavin from 5-amino-5-(4-hydroxybenzyl)-6-(D-ribitylimino)-5,6-dihydrouracil. The sequence is that of 7,8-didemethyl-8-hydroxy-5-deazariboflavin synthase from Methanococcus maripaludis (strain DSM 14266 / JCM 13030 / NBRC 101832 / S2 / LL).